Reading from the N-terminus, the 422-residue chain is Histidine--tRNA ligase (422 aa).

The protein belongs to the class-II aminoacyl-tRNA synthetase family. As to quaternary structure, homodimer.

The protein resides in the cytoplasm. The catalysed reaction is tRNA(His) + L-histidine + ATP = L-histidyl-tRNA(His) + AMP + diphosphate + H(+). In Ruthia magnifica subsp. Calyptogena magnifica, this protein is Histidine--tRNA ligase.